Here is a 464-residue protein sequence, read N- to C-terminus: Glutamate--tRNA ligase (464 aa).

A 'HIGH' region motif is present at residues 10-20; that stretch reads PSPTGYLHIGG. Basic and acidic residues predominate over residues 113–130; that stretch reads QEAKKEKPRYDGRWRPEA. The disordered stretch occupies residues 113–142; that stretch reads QEAKKEKPRYDGRWRPEAGKALPVPPTDVP. The 'KMSKS' region motif lies at 242 to 246; sequence KLSKR. Residue K245 participates in ATP binding.

Belongs to the class-I aminoacyl-tRNA synthetase family. Glutamate--tRNA ligase type 1 subfamily. In terms of assembly, monomer.

It localises to the cytoplasm. It catalyses the reaction tRNA(Glu) + L-glutamate + ATP = L-glutamyl-tRNA(Glu) + AMP + diphosphate. Its function is as follows. Catalyzes the attachment of glutamate to tRNA(Glu) in a two-step reaction: glutamate is first activated by ATP to form Glu-AMP and then transferred to the acceptor end of tRNA(Glu). The sequence is that of Glutamate--tRNA ligase from Dechloromonas aromatica (strain RCB).